The following is a 462-amino-acid chain: G-patch domain and KOW motifs-containing protein homolog 1 (462 aa).

2 disordered regions span residues 1–26 (MVEQ…KREE) and 182–218 (LKLP…EEEK). Residues 154-202 (IESFGLAILRGCNWKDGDGIGKNPQKVALKLPNRRPPGLGLGATPKNPV) form the G-patch domain. Residues 221 to 248 (EIKVGSFIKVVDGRNKGVYGKVEGRDDD) enclose the KOW 1 domain. Over residues 289–305 (EYDKEKDRLETERKKLE) the composition is skewed to basic and acidic residues. The segment at 289 to 337 (EYDKEKDRLETERKKLESQPPSTSTSQSSKDYKSKSSSSKHDKNSSEYE) is disordered. The segment covering 306–317 (SQPPSTSTSQSS) has biased composition (low complexity). The span at 318 to 337 (KDYKSKSSSSKHDKNSSEYE) shows a compositional bias: basic and acidic residues. One can recognise a KOW 2 domain in the interval 401-428 (PREIGEKLMIVAGKRSGQLAVMLDKDKR).

The protein belongs to the MOS2 family.

The protein resides in the nucleus. This chain is G-patch domain and KOW motifs-containing protein homolog 1, found in Caenorhabditis elegans.